The sequence spans 624 residues: MTQAEKGDAENGKEKGGEKEKEQRGVKRPIVPALVPESLQEQIQSNFIVVIHPGSTTLRIGRATDTLPASIPHVIARRHKQQGQPLYKDNWLLREGLNKPESNEQRQNGLKMVDQAIWSKKMSNGTRRIPVSPEQARSYNKQMRPAILDHCSGNKWTNTSHHPEFLVGEEALYVNPLDCYNIHWPIRRGQLNIHPGPGGSLTAVLADIEVIWSHAIQKYLEIPLKDLKYYRCILLIPDIYNKQHVKELVNMILMKMGFSGIVVHQESVCATFGSGLSSTCIVDVGDQKTSVCCVEDGVSHRNTRLCLAYGGSDVSRCFYWLMQRAGFPYRECQLTNKMDCLLLQHLKETFCHLDQDISGLQDHEFQIRHPDSPALLYQFRLGDEKLQAPMALFYPATFGIVGQKMTTLQHRSQGDPEDPHDEHYLLATQSKQEQSAKATADRKSASKPIGFEGDLRGQSSDLPERLHAQEVDLGSSQGDCLMAGNESEEALTALMSRKTAISLFEGKALGLDKAILHSIDCCSSDDTKKKMYSSILVVGGGLMFHKAQEFLQHRILNKMPPSFRRIIENVDVITRPKDMDPRLIAWKGGAVLACLDTTQELWIYQREWQRFGVRMLRERAAFVW.

Position 1 is an N-acetylmethionine (Met1). Residues 1–25 are compositionally biased toward basic and acidic residues; that stretch reads MTQAEKGDAENGKEKGGEKEKEQRG. Residues 1 to 29 form a disordered region; that stretch reads MTQAEKGDAENGKEKGGEKEKEQRGVKRP. ATP contacts are provided by Ser55 and Thr56. Ser132 is subject to Phosphoserine. 283-286 provides a ligand contact to ATP; sequence DVGD. Ser412 carries the phosphoserine modification. A disordered region spans residues 430-460; sequence SKQEQSAKATADRKSASKPIGFEGDLRGQSS.

The protein belongs to the actin family. ARP8 subfamily. In terms of assembly, component of the chromatin remodeling INO80 complex; specifically part of a complex module associated with the DBINO domain of INO80. Exists as monomers and dimers, but the dimer is most probably the biologically relevant form required for stable interactions with histones that exploits the twofold symmetry of the nucleosome core.

It is found in the nucleus. The protein resides in the chromosome. Plays an important role in the functional organization of mitotic chromosomes. Exhibits low basal ATPase activity, and unable to polymerize. In terms of biological role, proposed core component of the chromatin remodeling INO80 complex which is involved in transcriptional regulation, DNA replication and probably DNA repair. Required for the recruitment of INO80 (and probably the INO80 complex) to sites of DNA damage Strongly prefer nucleosomes and H3-H4 tetramers over H2A-H2B dimers, suggesting it may act as a nucleosome recognition module within the complex. The sequence is that of Actin-related protein 8 (ACTR8) from Ailuropoda melanoleuca (Giant panda).